A 94-amino-acid chain; its full sequence is Translation initiation factor IF-1 (94 aa).

In terms of domain architecture, S1-like spans 1–72 (MAKEELIQFE…EKGRLIFRHK (72 aa)). The disordered stretch occupies residues 71 to 94 (HKDERPGGTGAPRGAPPRGQFRRR). Residues 82 to 94 (PRGAPPRGQFRRR) are compositionally biased toward low complexity.

Belongs to the IF-1 family. As to quaternary structure, component of the 30S ribosomal translation pre-initiation complex which assembles on the 30S ribosome in the order IF-2 and IF-3, IF-1 and N-formylmethionyl-tRNA(fMet); mRNA recruitment can occur at any time during PIC assembly.

The protein localises to the cytoplasm. Its function is as follows. One of the essential components for the initiation of protein synthesis. Stabilizes the binding of IF-2 and IF-3 on the 30S subunit to which N-formylmethionyl-tRNA(fMet) subsequently binds. Helps modulate mRNA selection, yielding the 30S pre-initiation complex (PIC). Upon addition of the 50S ribosomal subunit IF-1, IF-2 and IF-3 are released leaving the mature 70S translation initiation complex. The sequence is that of Translation initiation factor IF-1 from Rhodopseudomonas palustris (strain BisB5).